The following is a 38-amino-acid chain: Antimicrobial peptide 1 (38 aa).

Disulfide bonds. In terms of tissue distribution, expressed in flowers but not in leaves, seeds or roots (at protein level).

Antimicrobial peptide. Active against fungal species B.cinerea (IC(50)=5.8 uM) and A.niger (IC(50)=5.6 uM) but not against F.oxysporum, F.graminearum, B.sorokinina and P.debaryanum at concentrations below 10 uM. Active against bacterial species P.syringae, B.subtilis and X.campestris. This Taraxacum officinale (Common dandelion) protein is Antimicrobial peptide 1.